Here is a 279-residue protein sequence, read N- to C-terminus: Formamidopyrimidine-DNA glycosylase (279 aa).

Pro2 serves as the catalytic Schiff-base intermediate with DNA. Catalysis depends on Glu3, which acts as the Proton donor. Catalysis depends on Lys58, which acts as the Proton donor; for beta-elimination activity. DNA-binding residues include His92, Arg111, and Arg153. The FPG-type zinc-finger motif lies at 238 to 272 (TVYGKEGQSCLSCSSTIIKTKHSGRSTFYCKTCQY). Arg262 serves as the catalytic Proton donor; for delta-elimination activity.

It belongs to the FPG family. In terms of assembly, monomer. Zn(2+) is required as a cofactor.

The catalysed reaction is Hydrolysis of DNA containing ring-opened 7-methylguanine residues, releasing 2,6-diamino-4-hydroxy-5-(N-methyl)formamidopyrimidine.. It catalyses the reaction 2'-deoxyribonucleotide-(2'-deoxyribose 5'-phosphate)-2'-deoxyribonucleotide-DNA = a 3'-end 2'-deoxyribonucleotide-(2,3-dehydro-2,3-deoxyribose 5'-phosphate)-DNA + a 5'-end 5'-phospho-2'-deoxyribonucleoside-DNA + H(+). In terms of biological role, involved in base excision repair of DNA damaged by oxidation or by mutagenic agents. Acts as a DNA glycosylase that recognizes and removes damaged bases. Has a preference for oxidized purines, such as 7,8-dihydro-8-oxoguanine (8-oxoG). Has AP (apurinic/apyrimidinic) lyase activity and introduces nicks in the DNA strand. Cleaves the DNA backbone by beta-delta elimination to generate a single-strand break at the site of the removed base with both 3'- and 5'-phosphates. This chain is Formamidopyrimidine-DNA glycosylase, found in Rickettsia massiliae (strain Mtu5).